A 507-amino-acid polypeptide reads, in one-letter code: MHKIDRKIPNIMGTQHPDNAGVPFFKGDQSKNPFITAYKEVDEAFNNFAVLDTDEYMWDWEGKHADAAVIDRLYSEHYEYFKGHQLGRDKFLTFRLPNIWEEKGYSLMQAMTTMLSAEDFARDLSFEQRPLFEAILPMAQTSEQLIEIEDKFSKLAHFKSDEFTSGSNNTDHIEMIPLFEGFKTQLHSPEILKEYLQLYEQRTGQSLPYLRVFLAGSDSALSNGFMNSIIGNKLALTRLHEFSDQKDLPIFPIAGTGSTIFRGGLSPKWIKRYLQEFPGLKTATVQSAFRYDYPLKQVQSAIKELRSGLQNNQAVSMTDREQNVLINVAKKSADCYHETLDQLINDLQKIFDAFPKRRDRRQHVGILGYSRQVDGYKMPRAITFTGSLYSVGVPPEFIGFGRALMSLNAEELAIFTRHYPNLRNDFTFLAHYISVDALESLIAKNPAWLEAKKDIQDLQSILQFEIGPSNEKEEEHSRLASDLVKISDPTTRTLLIQKQAVLRNFLG.

Residues M1–F25 are disordered.

Belongs to the PEPCase type 2 family. In terms of assembly, homotetramer. It depends on Mg(2+) as a cofactor.

The enzyme catalyses oxaloacetate + phosphate = phosphoenolpyruvate + hydrogencarbonate. In terms of biological role, catalyzes the irreversible beta-carboxylation of phosphoenolpyruvate (PEP) to form oxaloacetate (OAA), a four-carbon dicarboxylic acid source for the tricarboxylic acid cycle. This chain is Phosphoenolpyruvate carboxylase, found in Oenococcus oeni (strain ATCC BAA-331 / PSU-1).